The chain runs to 148 residues: MTITQVKIKKLENFSGSLPEYATEHSAGMDLIAANEQPITIKAAAIQLIPTGIAIALPDSFEAQIRPRSGLAVKHGITVANSPGTIDADYRGEIKVILINLGKEDFIIEKGMRIAQMIIAKYERILWEESSSLMETMRGSGGFGSTGV.

Substrate-binding positions include arginine 68–glycine 70, asparagine 81, threonine 85–aspartate 87, and lysine 95.

This sequence belongs to the dUTPase family. Mg(2+) serves as cofactor.

It carries out the reaction dUTP + H2O = dUMP + diphosphate + H(+). It participates in pyrimidine metabolism; dUMP biosynthesis; dUMP from dCTP (dUTP route): step 2/2. Functionally, this enzyme is involved in nucleotide metabolism: it produces dUMP, the immediate precursor of thymidine nucleotides and it decreases the intracellular concentration of dUTP so that uracil cannot be incorporated into DNA. The protein is Deoxyuridine 5'-triphosphate nucleotidohydrolase of Rickettsia conorii (strain ATCC VR-613 / Malish 7).